The primary structure comprises 147 residues: Hordoindoline-B1 (147 aa).

Residues 1-19 (MKTLFLLAILALVASTTFA) form the signal peptide. Residues 20–28 (QYSVGGGYN) constitute a propeptide that is removed on maturation.

Five disulfide bonds are present. In terms of tissue distribution, found in endosperm and aleurone layer of developing kernels, but not in the embryo.

It localises to the membrane. The protein resides in the secreted. It is found in the extracellular space. In terms of biological role, acts as a membranotoxin, probably through its antibacterial and antifungal activities, contributing to the defense mechanism of the plant against predators. Forms monovalent cation-selective ion channels in membranes. Contributes to grain texture and hardness. This Hordeum vulgare (Barley) protein is Hordoindoline-B1 (HINB-1).